The sequence spans 349 residues: tRNA-specific 2-thiouridylase MnmA (349 aa).

ATP-binding positions include 6–13 (LLSGGVDS) and methionine 32. Residue cysteine 103 is the Nucleophile of the active site. A disulfide bridge links cysteine 103 with cysteine 195. Glycine 127 contacts ATP. The interaction with tRNA stretch occupies residues 145 to 147 (KDQ). Residue cysteine 195 is the Cysteine persulfide intermediate of the active site.

The protein belongs to the MnmA/TRMU family.

It is found in the cytoplasm. It catalyses the reaction S-sulfanyl-L-cysteinyl-[protein] + uridine(34) in tRNA + AH2 + ATP = 2-thiouridine(34) in tRNA + L-cysteinyl-[protein] + A + AMP + diphosphate + H(+). Its function is as follows. Catalyzes the 2-thiolation of uridine at the wobble position (U34) of tRNA, leading to the formation of s(2)U34. The chain is tRNA-specific 2-thiouridylase MnmA from Pseudothermotoga lettingae (strain ATCC BAA-301 / DSM 14385 / NBRC 107922 / TMO) (Thermotoga lettingae).